The following is a 138-amino-acid chain: Cysteine desulfuration protein SufE (138 aa).

Cys51 serves as the catalytic Cysteine persulfide intermediate.

The protein belongs to the SufE family. As to quaternary structure, homodimer. Interacts with SufS.

It is found in the cytoplasm. It participates in cofactor biosynthesis; iron-sulfur cluster biosynthesis. Functionally, participates in cysteine desulfuration mediated by SufS. Cysteine desulfuration mobilizes sulfur from L-cysteine to yield L-alanine and constitutes an essential step in sulfur metabolism for biosynthesis of a variety of sulfur-containing biomolecules. Functions as a sulfur acceptor for SufS, by mediating the direct transfer of the sulfur atom from the S-sulfanylcysteine of SufS, an intermediate product of cysteine desulfuration process. The chain is Cysteine desulfuration protein SufE from Cronobacter sakazakii (strain ATCC BAA-894) (Enterobacter sakazakii).